The primary structure comprises 447 residues: Selenide, water dikinase 3 (447 aa).

The active site involves U50. A non-standard amino acid (selenocysteine) is located at residue U50. ATP is bound by residues K53, 103-105, D123, D146, and 197-200; these read GMD and GGQT. Mg(2+) is bound at residue D105. D146 contributes to the Mg(2+) binding site. D301 contributes to the Mg(2+) binding site.

It belongs to the selenophosphate synthase 1 family. Homodimer. Mg(2+) is required as a cofactor. In the embryo, expressed in retina, olfactory vesicles, tectum, pronephros ducts and myotomes at 24 hours post-fertilization and in retina, tectum, liver and intestinal bulb 3 days after fertilization.

It carries out the reaction hydrogenselenide + ATP + H2O = selenophosphate + AMP + phosphate + 2 H(+). Its function is as follows. Synthesizes selenophosphate from selenide and ATP. In Danio rerio (Zebrafish), this protein is Selenide, water dikinase 3.